We begin with the raw amino-acid sequence, 235 residues long: Gene 53 protein (235 aa).

This Mycobacterium phage D29 (Mycobacteriophage D29) protein is Gene 53 protein (53).